A 639-amino-acid chain; its full sequence is Splicing factor 1 (639 aa).

2 disordered regions span residues 1–42 and 65–94; these read MATG…VIPP and LRTG…GKRL. At Ala-2 the chain carries N-acetylalanine. Ser-14 is subject to Phosphoserine. The Nuclear localization signal motif lies at 15–19; the sequence is KKRKR. Residue Ser-20 is modified to Phosphoserine; by PKG. A phosphoserine mark is found at Ser-80 and Ser-82. Tyr-87 carries the post-translational modification Phosphotyrosine. Ser-89 is subject to Phosphoserine. The KH domain occupies 141 to 222; that stretch reads MIPQDEYPEI…ENVKKAVEQI (82 aa). Residues 277 to 296 form a CCHC-type zinc finger; it reads TVCTKCGGAGHIASDCKFQR. Positions 325-639 are disordered; it reads VPASVGSTSG…PAPPPPPPQN (315 aa). Residues 335-350 show a composition bias toward low complexity; it reads PATTPLASAPRPAAPA. A compositionally biased stretch (gly residues) spans 382-394; the sequence is MHGGGPGGPGGGP. Residues 418–447 are compositionally biased toward pro residues; that stretch reads NGPPPPWMQPPPPPMNQGPHPPGHHGPPPM. Leu-463 carries the post-translational modification Phosphoserine. Lys-467 is modified (omega-N-methylarginine). Positions 470–499 are enriched in pro residues; sequence MPPPPMGMMPPPPPPPSGQPPPPPSGPLPP. Low complexity-rich tracts occupy residues 515–534 and 542–566; these read SSMA…TTTT and PPWQ…NPTM. 2 stretches are compositionally biased toward pro residues: residues 567-591 and 598-608; these read VPLP…PPPG and APPPPPPPPMD. Residues 615–625 show a composition bias toward low complexity; sequence MMGMGVAGMPP. Residues 626–639 are compositionally biased toward pro residues; sequence FGMPPAPPPPPPQN.

This sequence belongs to the BBP/SF1 family. Binds U2AF2. Interacts with U1 snRNA. Binds EWSR1, FUS and TAF15. Interacts with RBM17. In terms of processing, phosphorylation on Ser-20 interferes with U2AF2 binding and spliceosome assembly. Isoform 6 is phosphorylated on Ser-463. Detected in lung, ovary, adrenal gland, colon, kidney, muscle, pancreas, thyroid, placenta, brain, liver and heart.

It localises to the nucleus. Functionally, necessary for the ATP-dependent first step of spliceosome assembly. Binds to the intron branch point sequence (BPS) 5'-UACUAAC-3' of the pre-mRNA. May act as transcription repressor. The sequence is that of Splicing factor 1 (SF1) from Homo sapiens (Human).